We begin with the raw amino-acid sequence, 487 residues long: MKAQPKASHFIGGAFVEDKAGKPLPVIYPATDEEIASLYSATPGIIEAAYAAALKAQGEWAALKPVERGRILRRTAEILREKNRKLSKLETLDTGKALQETLVADAASAADALEFFGGIISGFNGEFVELGGSFAYTRREALGICVGIGAWNYPIQIAAWKSAPALAMGNAFIFKPSENTPLSALALAEAYKEAGLPDGLFNVVQGYGDVGAALVNHRLTAKVSLTGSVPTGRRIMAQAGEQLKHVTMELGGKSPLIVFDDADLESAIGGAMLGNFYSTGQVCSNGTRVFVHKNIRERFIERLVERTRKIRIGDPFDEATQMGPLISAAQRDKVLSYIKKGKAEGATLACGGGVPKLQGFDKGFFIEPTVFADVTDTMTIAREEIFGPVMSVLEFSDEDEVIARANDSEFGLAAGVFTADLSRGHHVIGQIKAGTCWINAYNLTPVEVPFGGYKQSGIGRENGIAALAHYSQIKTVYVEMGKVDSPY.

K(+) contacts are provided by isoleucine 27 and aspartate 93. 149-151 (GAW) serves as a coordination point for NAD(+). Lysine 161 functions as the Charge relay system in the catalytic mechanism. NAD(+)-binding positions include 175 to 178 (KPSE) and 228 to 231 (SVPT). Residue leucine 243 participates in K(+) binding. Glutamate 249 acts as the Proton acceptor in catalysis. 3 residues coordinate NAD(+): glycine 251, cysteine 283, and glutamate 384. The Nucleophile role is filled by cysteine 283. Cysteine 283 is modified (cysteine sulfenic acid (-SOH)). Residues lysine 454 and glycine 457 each contribute to the K(+) site. The Charge relay system role is filled by glutamate 461.

This sequence belongs to the aldehyde dehydrogenase family. In terms of assembly, dimer of dimers. Requires K(+) as cofactor.

It catalyses the reaction betaine aldehyde + NAD(+) + H2O = glycine betaine + NADH + 2 H(+). It functions in the pathway amine and polyamine biosynthesis; betaine biosynthesis via choline pathway; betaine from betaine aldehyde: step 1/1. In terms of biological role, involved in the biosynthesis of the osmoprotectant glycine betaine. Catalyzes the irreversible oxidation of betaine aldehyde to the corresponding acid. The polypeptide is Betaine aldehyde dehydrogenase (Brucella canis (strain ATCC 23365 / NCTC 10854 / RM-666)).